A 587-amino-acid polypeptide reads, in one-letter code: Proteasome-associated ATPase (587 aa).

Positions 1–94 (MAARDDAEAR…KEEVDRLAQP (94 aa)) form a coiled coil. 276–281 (GCGKTL) serves as a coordination point for ATP. Residues 586–587 (YL) form a docks into pockets in the proteasome alpha-ring region.

The protein belongs to the AAA ATPase family. As to quaternary structure, homohexamer. Assembles into a hexameric ring structure that caps the 20S proteasome core. Strongly interacts with the prokaryotic ubiquitin-like protein Pup through a hydrophobic interface; the interacting region of ARC lies in its N-terminal coiled-coil domain. There is one Pup binding site per ARC hexamer ring. Upon ATP-binding, the C-terminus of ARC interacts with the alpha-rings of the proteasome core, possibly by binding to the intersubunit pockets.

The protein operates within protein degradation; proteasomal Pup-dependent pathway. In terms of biological role, ATPase which is responsible for recognizing, binding, unfolding and translocation of pupylated proteins into the bacterial 20S proteasome core particle. May be essential for opening the gate of the 20S proteasome via an interaction with its C-terminus, thereby allowing substrate entry and access to the site of proteolysis. Thus, the C-termini of the proteasomal ATPase may function like a 'key in a lock' to induce gate opening and therefore regulate proteolysis. In Streptosporangium roseum (strain ATCC 12428 / DSM 43021 / JCM 3005 / KCTC 9067 / NCIMB 10171 / NRRL 2505 / NI 9100), this protein is Proteasome-associated ATPase.